A 407-amino-acid polypeptide reads, in one-letter code: MKRAFIMVLDSFGIGATEDADRFGDVGSDTLGHIAEACAKGEADNGRKGPLNLPNLTRLGLVKAYEGSTGKIAAGMDGNADVIGAYAWAHELSSGKDTPSGHWEIAGVPVLFDWGYFSDHENSFPQELLDKLVKRANLPGYLGNCHSSGTVILDQFGEEHMKTGKPIFYTSADSVFQIACHEETFGLDKLYELCEIAREELTEGGYNIGRVIARPFIGDKAGNFQRTGNRHDLAVEPPAPTVLQKLVDEKQGHVVSVGKIADIYANCGITKKVKATGLDALFDATLKEMKEAGDKTIVFTNFVDFDSSWGHRRDIAGYAAGLELFDRRLPELMELVGEDDILILTADHGCDPSWTGTDHTREHIPVLIYGPKVKPGSLGHRETFADIGQTLATYFGTSPMDYGKNML.

6 residues coordinate Mn(2+): Asp-10, Asp-306, His-311, Asp-347, His-348, and His-359.

This sequence belongs to the phosphopentomutase family. It depends on Mn(2+) as a cofactor.

It is found in the cytoplasm. The catalysed reaction is 2-deoxy-alpha-D-ribose 1-phosphate = 2-deoxy-D-ribose 5-phosphate. It catalyses the reaction alpha-D-ribose 1-phosphate = D-ribose 5-phosphate. It functions in the pathway carbohydrate degradation; 2-deoxy-D-ribose 1-phosphate degradation; D-glyceraldehyde 3-phosphate and acetaldehyde from 2-deoxy-alpha-D-ribose 1-phosphate: step 1/2. In terms of biological role, isomerase that catalyzes the conversion of deoxy-ribose 1-phosphate (dRib-1-P) and ribose 1-phosphate (Rib-1-P) to deoxy-ribose 5-phosphate (dRib-5-P) and ribose 5-phosphate (Rib-5-P), respectively. The protein is Phosphopentomutase of Salmonella paratyphi A (strain AKU_12601).